Consider the following 91-residue polypeptide: Sec-independent protein translocase protein TatA (91 aa).

A helical membrane pass occupies residues 2–22 (ANLGFPELVLIAVVILVLFGW). Over residues 43-55 (VSEMKNDGAEAEK) the composition is skewed to basic and acidic residues. Residues 43-91 (VSEMKNDGAEAEKTSAASTKTDEITSVSSTDTPQPTVTVESKDEKKHPA) are disordered. Residues 57-81 (SAASTKTDEITSVSSTDTPQPTVTV) are compositionally biased toward polar residues. Residues 82-91 (ESKDEKKHPA) are compositionally biased toward basic and acidic residues.

The protein belongs to the TatA/E family. The Tat system comprises two distinct complexes: a TatABC complex, containing multiple copies of TatA, TatB and TatC subunits, and a separate TatA complex, containing only TatA subunits. Substrates initially bind to the TatABC complex, which probably triggers association of the separate TatA complex to form the active translocon.

Its subcellular location is the cell membrane. Its function is as follows. Part of the twin-arginine translocation (Tat) system that transports large folded proteins containing a characteristic twin-arginine motif in their signal peptide across membranes. TatA could form the protein-conducting channel of the Tat system. The sequence is that of Sec-independent protein translocase protein TatA from Corynebacterium kroppenstedtii (strain DSM 44385 / JCM 11950 / CIP 105744 / CCUG 35717).